Reading from the N-terminus, the 341-residue chain is Holliday junction branch migration complex subunit RuvB (341 aa).

Residues 1-182 (MKDRLISAVA…FGVISRLEYY (182 aa)) form a large ATPase domain (RuvB-L) region. ATP-binding positions include Leu21, Arg22, Gly63, Lys66, Thr67, Thr68, 129 to 131 (EDY), Arg172, Tyr182, and Arg219. Mg(2+) is bound at residue Thr67. The tract at residues 183–253 (RPEDLVLIVN…VAVEALKFLE (71 aa)) is small ATPAse domain (RuvB-S). The interval 256-341 (PLGLDFADRR…REETDQVSLW (86 aa)) is head domain (RuvB-H). DNA is bound by residues Arg311 and Arg316.

It belongs to the RuvB family. As to quaternary structure, homohexamer. Forms an RuvA(8)-RuvB(12)-Holliday junction (HJ) complex. HJ DNA is sandwiched between 2 RuvA tetramers; dsDNA enters through RuvA and exits via RuvB. An RuvB hexamer assembles on each DNA strand where it exits the tetramer. Each RuvB hexamer is contacted by two RuvA subunits (via domain III) on 2 adjacent RuvB subunits; this complex drives branch migration. In the full resolvosome a probable DNA-RuvA(4)-RuvB(12)-RuvC(2) complex forms which resolves the HJ.

Its subcellular location is the cytoplasm. The enzyme catalyses ATP + H2O = ADP + phosphate + H(+). Its function is as follows. The RuvA-RuvB-RuvC complex processes Holliday junction (HJ) DNA during genetic recombination and DNA repair, while the RuvA-RuvB complex plays an important role in the rescue of blocked DNA replication forks via replication fork reversal (RFR). RuvA specifically binds to HJ cruciform DNA, conferring on it an open structure. The RuvB hexamer acts as an ATP-dependent pump, pulling dsDNA into and through the RuvAB complex. RuvB forms 2 homohexamers on either side of HJ DNA bound by 1 or 2 RuvA tetramers; 4 subunits per hexamer contact DNA at a time. Coordinated motions by a converter formed by DNA-disengaged RuvB subunits stimulates ATP hydrolysis and nucleotide exchange. Immobilization of the converter enables RuvB to convert the ATP-contained energy into a lever motion, pulling 2 nucleotides of DNA out of the RuvA tetramer per ATP hydrolyzed, thus driving DNA branch migration. The RuvB motors rotate together with the DNA substrate, which together with the progressing nucleotide cycle form the mechanistic basis for DNA recombination by continuous HJ branch migration. Branch migration allows RuvC to scan DNA until it finds its consensus sequence, where it cleaves and resolves cruciform DNA. This Pelotomaculum thermopropionicum (strain DSM 13744 / JCM 10971 / SI) protein is Holliday junction branch migration complex subunit RuvB.